A 200-amino-acid chain; its full sequence is Recombination protein RecR (200 aa).

The segment at 58 to 73 (CQKCHNISDTTLCSIC) adopts a C4-type zinc-finger fold. The Toprim domain maps to 81-176 (GLICVVENIQ…KLSNIARGVA (96 aa)).

It belongs to the RecR family.

Its function is as follows. May play a role in DNA repair. It seems to be involved in an RecBC-independent recombinational process of DNA repair. It may act with RecF and RecO. The protein is Recombination protein RecR of Amoebophilus asiaticus (strain 5a2).